Here is a 1469-residue protein sequence, read N- to C-terminus: Chromosome condensation protein dpy-27 (1469 aa).

A disordered region spans residues 1–25; that stretch reads MQPFKRRALTSDDDRPYADTDSMPE. Basic and acidic residues predominate over residues 9–18; that stretch reads LTSDDDRPYA. 122–129 is a binding site for ATP; that stretch reads GPNGSGKS. Residues 356–542 adopt a coiled-coil conformation; sequence ELEENKDIML…KGTLQTMMAE (187 aa). The SMC hinge domain maps to 621 to 736; sequence PGFKGRLGDL…VDSLEEATRI (116 aa). Residues 758-781 form a disordered region; the sequence is GALTGGGKPTTGRIRNDNNPNMSG. Coiled-coil stretches lie at residues 805 to 974, 1016 to 1056, and 1159 to 1182; these read LKLQ…AQLE, AYQT…DIIE, and TSAK…RMAR. The disordered stretch occupies residues 1404-1469; it reads LPEFNRFPPA…VQRRVRRSRH (66 aa). The segment covering 1439–1449 has biased composition (acidic residues); the sequence is EEEDEEDELIE.

This sequence belongs to the SMC family. SMC4 subfamily. As to quaternary structure, component of the dosage compensation complex, which contains the mix-1/SMC2 and dpy-27/SMC4 heterodimer, and three non SMC subunits that probably regulate the complex: dpy-26, capg-1 and dpy-28. Within the complex, interacts with dpy-28, mix-1, dpy-26 and capg-1. Interacts with dpy-21. Interacts with dpy-28; the interaction is required for dpy-28 protein stability and dpy-28 association with the X chromosome. Interacts with smcl-1.

The protein resides in the nucleus. The protein localises to the chromosome. In terms of biological role, central component of the condensin I-like dosage compensation complex that associates specifically with hermaphrodite X chromosomes to reduce their gene transcription throughout development. Its strong similarity with the condensin subunit smc4 suggests that it may reduce the X-chromosome transcript level by condensing the chromatin structure during interphase. Involved in the recruitment of the dosage compensation proteins mix-1 and dpy-21 to the X chromosome. Might be involved in the reduction of histone H4 lysine 16 acetylation (H4K16ac) on dosage compensated X chromosomes. As a member of the dosage compensation complex, also binds to regulatory regions of the autosomal her-1 gene, required for male development, possibly contributing to its repression in hermaphrodites. Also plays a role in the regulation of growth and body fat metabolism downstream of the TOR complex 2 pathway. The chain is Chromosome condensation protein dpy-27 (dpy-27) from Caenorhabditis elegans.